The sequence spans 441 residues: ATP-dependent protease ATPase subunit HslU (441 aa).

Residues Ile18, 60–65 (GVGKTE), Asp254, Glu319, and Arg391 contribute to the ATP site.

Belongs to the ClpX chaperone family. HslU subfamily. In terms of assembly, a double ring-shaped homohexamer of HslV is capped on each side by a ring-shaped HslU homohexamer. The assembly of the HslU/HslV complex is dependent on binding of ATP.

The protein resides in the cytoplasm. In terms of biological role, ATPase subunit of a proteasome-like degradation complex; this subunit has chaperone activity. The binding of ATP and its subsequent hydrolysis by HslU are essential for unfolding of protein substrates subsequently hydrolyzed by HslV. HslU recognizes the N-terminal part of its protein substrates and unfolds these before they are guided to HslV for hydrolysis. The sequence is that of ATP-dependent protease ATPase subunit HslU from Shewanella frigidimarina (strain NCIMB 400).